A 660-amino-acid chain; its full sequence is tRNA 5-methylaminomethyl-2-thiouridine biosynthesis bifunctional protein MnmC (660 aa).

Residues 1-242 (MTDRIVPATL…KRAMLVGEFA (242 aa)) are tRNA (mnm(5)s(2)U34)-methyltransferase. The tract at residues 266-660 (IGAGLAGCAV…VRALRHGRVA (395 aa)) is FAD-dependent cmnm(5)s(2)U34 oxidoreductase.

The protein in the N-terminal section; belongs to the methyltransferase superfamily. tRNA (mnm(5)s(2)U34)-methyltransferase family. It in the C-terminal section; belongs to the DAO family. FAD is required as a cofactor.

The protein resides in the cytoplasm. The catalysed reaction is 5-aminomethyl-2-thiouridine(34) in tRNA + S-adenosyl-L-methionine = 5-methylaminomethyl-2-thiouridine(34) in tRNA + S-adenosyl-L-homocysteine + H(+). Its function is as follows. Catalyzes the last two steps in the biosynthesis of 5-methylaminomethyl-2-thiouridine (mnm(5)s(2)U) at the wobble position (U34) in tRNA. Catalyzes the FAD-dependent demodification of cmnm(5)s(2)U34 to nm(5)s(2)U34, followed by the transfer of a methyl group from S-adenosyl-L-methionine to nm(5)s(2)U34, to form mnm(5)s(2)U34. The sequence is that of tRNA 5-methylaminomethyl-2-thiouridine biosynthesis bifunctional protein MnmC from Burkholderia pseudomallei (strain K96243).